The sequence spans 503 residues: 2-isopropylmalate synthase (503 aa).

The Pyruvate carboxyltransferase domain maps to 4 to 264; sequence LYIFDTTLRD…EVSIKTEEIY (261 aa). Residues aspartate 13, histidine 201, histidine 203, and asparagine 237 each coordinate Mn(2+). Positions 388–503 are regulatory domain; that stretch reads KLRHLQVVSG…NQLVMLKGKD (116 aa).

The protein belongs to the alpha-IPM synthase/homocitrate synthase family. LeuA type 1 subfamily. In terms of assembly, homodimer. Requires Mn(2+) as cofactor.

The protein resides in the cytoplasm. It carries out the reaction 3-methyl-2-oxobutanoate + acetyl-CoA + H2O = (2S)-2-isopropylmalate + CoA + H(+). It participates in amino-acid biosynthesis; L-leucine biosynthesis; L-leucine from 3-methyl-2-oxobutanoate: step 1/4. In terms of biological role, catalyzes the condensation of the acetyl group of acetyl-CoA with 3-methyl-2-oxobutanoate (2-ketoisovalerate) to form 3-carboxy-3-hydroxy-4-methylpentanoate (2-isopropylmalate). This is 2-isopropylmalate synthase from Dictyoglomus turgidum (strain DSM 6724 / Z-1310).